The primary structure comprises 507 residues: Protein adenylyltransferase fic-1 (507 aa).

The helical transmembrane segment at 40–56 threads the bilayer; that stretch reads YSLTTVVLVSLVVTLVC. TPR repeat units lie at residues 146-179 and 180-213; these read AILA…APNN and PQIL…DPGN. Positions 269-274 match the Inhibitory (S/T)XXXE(G/N) motif motif; sequence TVAIEG. ATP is bound at residue Glu-273. Positions 325-460 constitute a Fido domain; it reads ISIDDILEMH…LRPFVRYVAK (136 aa). Residue Thr-351 is modified to O-AMP-threonine; by autocatalysis. 356 to 359 lines the ATP pocket; that stretch reads VGKF. His-403 is a catalytic residue. Residues 407–414, 439–440, and Asn-447 each bind ATP; these read DGNGRTAR and YY. Position 475 is an O-AMP-threonine; by autocatalysis (Thr-475). The interval 482 to 507 is disordered; sequence NGEEPNLTAEESKVSEKIETECRAGS. The span at 491 to 507 shows a compositional bias: basic and acidic residues; that stretch reads EESKVSEKIETECRAGS.

The protein belongs to the fic family. Forms homodimers; homodimerization might be required for adenylyltransferase activity.

The protein localises to the endoplasmic reticulum membrane. It is found in the nucleus membrane. It carries out the reaction L-tyrosyl-[protein] + ATP = O-(5'-adenylyl)-L-tyrosyl-[protein] + diphosphate. It catalyses the reaction L-threonyl-[protein] + ATP = 3-O-(5'-adenylyl)-L-threonyl-[protein] + diphosphate. The catalysed reaction is 3-O-(5'-adenylyl)-L-threonyl-[protein] + H2O = L-threonyl-[protein] + AMP + H(+). Its activity is regulated as follows. The side chain of Glu-273 determines which of the two opposing activities (AMPylase or de-AMPylase) will take place. In response to endoplasmic reticulum stress, mediates de-AMPylase activity. Adenylyltransferase activity is inhibited by the inhibitory helix present at the N-terminus: Glu-273 binds ATP and competes with ATP-binding at Arg-414, thereby preventing adenylyltransferase activity. In unstressed cells, disengagement of Glu-273 promotes adenylyltransferase activity. Activation dissociates ATP-binding from Glu-273, allowing ordered binding of the entire ATP moiety with the alpha-phosphate in an orientation that is productive for accepting an incoming target hydroxyl side chain. Functionally, protein that can both mediate the addition of adenosine 5'-monophosphate (AMP) to specific residues of target proteins (AMPylation), and the removal of the same modification from target proteins (de-AMPylation), depending on the context. The side chain of Glu-273 determines which of the two opposing activities (AMPylase or de-AMPylase) will take place. Adenylyltransferase that mediates the addition of adenosine 5'-monophosphate (AMP) to specific residues of target proteins. In vivo target proteins include the heat-shock 70 family proteins hsp-1 and hsp-3 and the translation elongation factors eef-1A, eef-1G and eef-2. Can AMPylate core histone H3 in vitro. Can also act as a phosphodiesterase by mediating removal of ATP (de-AMPylation) from target proteins. Decreases susceptibility to P.aeruginosa-mediated killing and might therefore play a role in the innate immune response. The sequence is that of Protein adenylyltransferase fic-1 (fic-1) from Caenorhabditis briggsae.